A 76-amino-acid chain; its full sequence is Omega-scoloptoxin(15)-Ssd3c (76 aa).

Residues 1 to 23 form the signal peptide; sequence MEKKIIFLVVLVALLALPEFISS.

Belongs to the scoloptoxin-15 family. Contains 2 disulfide bonds. In terms of tissue distribution, expressed by the venom gland.

The protein resides in the secreted. Its function is as follows. Voltage-gated calcium channel inhibitor (Cav) (8.6% block at 10 nM), when tested on DRG neurons. This chain is Omega-scoloptoxin(15)-Ssd3c, found in Scolopendra dehaani (Thai centipede).